We begin with the raw amino-acid sequence, 331 residues long: Biotin synthase (331 aa).

Positions Q51–R278 constitute a Radical SAM core domain. Residues C66, C70, and C73 each contribute to the [4Fe-4S] cluster site. Residues C110, C141, C201, and R273 each contribute to the [2Fe-2S] cluster site.

Belongs to the radical SAM superfamily. Biotin synthase family. In terms of assembly, homodimer. [4Fe-4S] cluster is required as a cofactor. It depends on [2Fe-2S] cluster as a cofactor.

The catalysed reaction is (4R,5S)-dethiobiotin + (sulfur carrier)-SH + 2 reduced [2Fe-2S]-[ferredoxin] + 2 S-adenosyl-L-methionine = (sulfur carrier)-H + biotin + 2 5'-deoxyadenosine + 2 L-methionine + 2 oxidized [2Fe-2S]-[ferredoxin]. The protein operates within cofactor biosynthesis; biotin biosynthesis; biotin from 7,8-diaminononanoate: step 2/2. Its function is as follows. Catalyzes the conversion of dethiobiotin (DTB) to biotin by the insertion of a sulfur atom into dethiobiotin via a radical-based mechanism. In Histophilus somni (strain 129Pt) (Haemophilus somnus), this protein is Biotin synthase.